The chain runs to 394 residues: MKPFISLASLIVLIASASAGGDDDYGKYGYGSYGPGIGGIGGGGGGIVIGGGGGGIGGGIGGGIGGGIGGGGLIGGGGLIGGFGPGSVSGSVNQFGGVRTRAFGLGGTSPAVRGAAQGAATLSALGVASGRPSRVSGVSVGTGGGRALVSGSATPIGGYGIGIPYGVYGGGYGGYGGGYGGYGLGYGGYGGGYGGYGYGGYGYGPDLATFQGHTFGNLATGSINSLTGGYQIPYGGILSLYGPYGGYGGGYGGYGGGYGGYGGGYGIGIGSGGLGYGGYGYGGYGLGGSTLTGVSQSGPFGTASMYGQAYGAGVPLFGTTYFGGVNVGSPYGIYGGGYPIGGIGGGAGPIGGGGIVIGGGVGGIGGGGIGGIGGGGIGGGGIIGGGPIIRKKKY.

Residues 1-19 (MKPFISLASLIVLIASASA) form the signal peptide.

Prismatic layer of shell (at protein level). Expressed primarily in the mantle with highest level in the mantle edge and lower level in the mantle pallium.

It localises to the secreted. The sequence is that of Shematrin-like protein 2 from Pinctada maxima (Silver-lipped pearl oyster).